The chain runs to 245 residues: Protein ARV 1 (245 aa).

5 helical membrane passes run 70–90, 117–137, 163–183, 200–220, and 224–244; these read INPA…AYLL, IKVL…FAIA, IFLL…FVDI, TMTR…LVGQ, and PTIF…FFRI.

This sequence belongs to the ARV1 family. Restricted to tissues in which cells are actively dividing or expanding. Mostly expressed in roots and flowers, and, to a lower extent, in stems and leaves.

It is found in the endoplasmic reticulum membrane. Mediator of sterol homeostasis involved in sterol uptake, trafficking and distribution into membranes. Also regulates the sphingolipid metabolism. The protein is Protein ARV 1 of Arabidopsis thaliana (Mouse-ear cress).